A 267-amino-acid polypeptide reads, in one-letter code: 1-(5-phosphoribosyl)-5-[(5-phosphoribosylamino)methylideneamino] imidazole-4-carboxamide isomerase (267 aa).

Belongs to the HisA/HisF family.

The protein localises to the cytoplasm. The catalysed reaction is 1-(5-phospho-beta-D-ribosyl)-5-[(5-phospho-beta-D-ribosylamino)methylideneamino]imidazole-4-carboxamide = 5-[(5-phospho-1-deoxy-D-ribulos-1-ylimino)methylamino]-1-(5-phospho-beta-D-ribosyl)imidazole-4-carboxamide. Its pathway is amino-acid biosynthesis; L-histidine biosynthesis; L-histidine from 5-phospho-alpha-D-ribose 1-diphosphate: step 4/9. In Kluyveromyces lactis (strain ATCC 8585 / CBS 2359 / DSM 70799 / NBRC 1267 / NRRL Y-1140 / WM37) (Yeast), this protein is 1-(5-phosphoribosyl)-5-[(5-phosphoribosylamino)methylideneamino] imidazole-4-carboxamide isomerase (HIS6).